We begin with the raw amino-acid sequence, 80 residues long: UPF0057 membrane protein ZK632.10 (80 aa).

Helical transmembrane passes span 4–24 and 32–52; these read ILLA…DVGC and ILLT…IILC.

Belongs to the UPF0057 (PMP3) family.

The protein resides in the membrane. The polypeptide is UPF0057 membrane protein ZK632.10 (Caenorhabditis elegans).